Here is a 458-residue protein sequence, read N- to C-terminus: Succinate-semialdehyde dehydrogenase [NADP(+)] 1 (458 aa).

Residues Trp-134–Asn-135, Lys-158–Ser-161, and Gly-210–Ser-211 each bind NADP(+). The active-site Proton acceptor is the Glu-232. Leu-233 provides a ligand contact to NADP(+). The active-site Nucleophile is the Cys-266. NADP(+) is bound at residue Glu-363.

It belongs to the aldehyde dehydrogenase family.

It carries out the reaction succinate semialdehyde + NADP(+) + H2O = succinate + NADPH + 2 H(+). In terms of biological role, catalyzes the NADP(+)-dependent oxidation of succinate semialdehyde to succinate. It is believed to be the main source of succinate semialdehyde dehydrogenase activity in Mycobacterium. In Mycobacterium ulcerans (strain Agy99), this protein is Succinate-semialdehyde dehydrogenase [NADP(+)] 1 (gabD1).